Consider the following 275-residue polypeptide: Catechol 1,2-dioxygenase 2 (275 aa).

The Fe cation site is built by Tyr158, Tyr192, His216, and His218.

This sequence belongs to the intradiol ring-cleavage dioxygenase family. Homodimer. The cofactor is Fe(3+).

It carries out the reaction catechol + O2 = cis,cis-muconate + 2 H(+). It functions in the pathway aromatic compound metabolism; beta-ketoadipate pathway; 5-oxo-4,5-dihydro-2-furylacetate from catechol: step 1/3. Can cleave 4-methyl-, 4-chloro-, and 3-methoxycatechol at lower rates than catechol, but has no activity with 4-nitrocatechol or protocatechuic acid. The polypeptide is Catechol 1,2-dioxygenase 2 (catA2) (Acinetobacter lwoffii).